The primary structure comprises 316 residues: Lys-63-specific deubiquitinase BRCC36 (316 aa).

Ala2 is modified (N-acetylalanine). The region spanning 12–179 (VHLESDAFLV…YTCFQSIQAQ (168 aa)) is the MPN domain. Residues His122, His124, and Asp135 each coordinate Zn(2+). The short motif at 122–135 (HSHPHITVWPSHVD) is the JAMM motif element. At Ser258 the chain carries Phosphoserine.

Belongs to the peptidase M67A family. BRCC36 subfamily. As to quaternary structure, component of the ARISC complex, at least composed of UIMC1/RAP80, ABRAXAS1, BRCC3/BRCC36, BABAM2 and BABAM1/NBA1. Component of the BRCA1-A complex, at least composed of BRCA1, BARD1, UIMC1/RAP80, ABRAXAS1, BRCC3/BRCC36, BABAM2 and BABAM1/NBA1. In the BRCA1-A complex, interacts directly with ABRAXAS1 and BABAM2. Component of the BRISC complex, at least composed of ABRAXAS2, BRCC3/BRCC36, BABAM2 and BABAM1/NBA1. Identified in a complex with SHMT2 and the other subunits of the BRISC complex. In the BRISC complex, interacts directly with ABRAXAS2. Identified in a complex with ABRAXAS2 and NUMA1. The BRISC complex interacts with the CSN complex. Component of the BRCA1/BRCA2 containing complex (BRCC), which also contains BRCA1, BRCA2, BARD1, BABAM2 and RAD51. BRCC is a ubiquitin E3 ligase complex that enhances cellular survival following DNA damage. Interacts with BRCA1. Binds polyubiquitin. Interacts with PWWP2B. Interacts with HDAC1; this interaction is enhanced in the presence of PWWP2B. Zn(2+) is required as a cofactor.

The protein localises to the nucleus. It is found in the cytoplasm. The protein resides in the cytoskeleton. Its subcellular location is the spindle pole. Metalloprotease that specifically cleaves 'Lys-63'-linked polyubiquitin chains. Does not have activity toward 'Lys-48'-linked polyubiquitin chains. Component of the BRCA1-A complex, a complex that specifically recognizes 'Lys-63'-linked ubiquitinated histones H2A and H2AX at DNA lesions sites, leading to target the BRCA1-BARD1 heterodimer to sites of DNA damage at double-strand breaks (DSBs). In the BRCA1-A complex, it specifically removes 'Lys-63'-linked ubiquitin on histones H2A and H2AX, antagonizing the RNF8-dependent ubiquitination at double-strand breaks (DSBs). Catalytic subunit of the BRISC complex, a multiprotein complex that specifically cleaves 'Lys-63'-linked ubiquitin in various substrates. Mediates the specific 'Lys-63'-specific deubiquitination associated with the COP9 signalosome complex (CSN), via the interaction of the BRISC complex with the CSN complex. The BRISC complex is required for normal mitotic spindle assembly and microtubule attachment to kinetochores via its role in deubiquitinating NUMA1. Plays a role in interferon signaling via its role in the deubiquitination of the interferon receptor IFNAR1; deubiquitination increases IFNAR1 activity by enhancing its stability and cell surface expression. Acts as a regulator of the NLRP3 inflammasome by mediating deubiquitination of NLRP3, leading to NLRP3 inflammasome assembly. Down-regulates the response to bacterial lipopolysaccharide (LPS) via its role in IFNAR1 deubiquitination. Deubiquitinates HDAC1 and PWWP2B leading to their stabilization. The sequence is that of Lys-63-specific deubiquitinase BRCC36 (BRCC3) from Bos taurus (Bovine).